The sequence spans 316 residues: Aspartate carbamoyltransferase catalytic subunit (316 aa).

R58 and T59 together coordinate carbamoyl phosphate. K86 serves as a coordination point for L-aspartate. Carbamoyl phosphate contacts are provided by R108, H136, and Q139. 2 residues coordinate L-aspartate: R169 and R223. Residues G264 and P265 each coordinate carbamoyl phosphate.

Belongs to the aspartate/ornithine carbamoyltransferase superfamily. ATCase family. Heterododecamer (2C3:3R2) of six catalytic PyrB chains organized as two trimers (C3), and six regulatory PyrI chains organized as three dimers (R2).

It catalyses the reaction carbamoyl phosphate + L-aspartate = N-carbamoyl-L-aspartate + phosphate + H(+). It functions in the pathway pyrimidine metabolism; UMP biosynthesis via de novo pathway; (S)-dihydroorotate from bicarbonate: step 2/3. Its function is as follows. Catalyzes the condensation of carbamoyl phosphate and aspartate to form carbamoyl aspartate and inorganic phosphate, the committed step in the de novo pyrimidine nucleotide biosynthesis pathway. This is Aspartate carbamoyltransferase catalytic subunit from Granulibacter bethesdensis (strain ATCC BAA-1260 / CGDNIH1).